A 784-amino-acid polypeptide reads, in one-letter code: MFDVLSDDLMQKMDAYWRAANYLSVGQIYLQDNPLLEQPLRIEHIKPRLLGHWGTTPGLNLLYVHLNRLISAHDLDMIYIIGPGHGGPGLVANSYLEGSYTERYPAIERNRNGLQRLFRQFSWPNGVPSHVSPETPGSIHEGGELGYSLAHAYGAAFDNPDLIVACIVGDGEAETGALATSWHSNKFLNPARDGAVLPILHLNGFKIANPTILARIGRQELTDLMRGYGYEPIVVEGDDPKLVHHTLAAALERALADIRAIQAAARHQGVTVRPRWPMIILRTPKGWTGPKQVDGKQIEGTWRAHQVPIASFKDPTHVQLLETWLRSYRPEELFDASGKFRDDLAALAPTGHRRMSANPHANGGELLQPLSLPDFHDYAVTQSGPGTVKAEATRVLGAFLRDVMKSNLDAKNFRLFGPDETASNRLDAVLEVTDKEWMAEIEDVDVALGPDGRVMEVLSEHLCQGWLEGYLLTGRHGFFSCYEAFIHIVGSMFNQHAKWLKTCDAIPWRRPIASLNYLLTSHVWRQDHNGLSHQDPGFIDHVVNKKASVVRVYLPPDANCLLSVADHCLRSRNYVNLIVAGKQPEWQWLDIDSAVRHCSAGAGIWHWASNGEDDPDVVMACAGDVPTLETLAAVMLLREYVPDIRVRVVNVVDLMVLQPSSEHPHGLDDKRFDEIFTVDKPVVFAFHGYPWLIHRLTYRRRNHFNIHVRGYKEEGSTTTPFDMVVLNDLDRYRLALDAIRRIPRLAGEVEAATARYWATMQRHKLYIGEHGDDMPEVRDWSWQG.

This sequence belongs to the XFP family. Thiamine diphosphate is required as a cofactor.

The polypeptide is Probable phosphoketolase (Rhodopseudomonas palustris (strain BisB5)).